Consider the following 458-residue polypeptide: Phosphoglucosamine mutase (458 aa).

The active-site Phosphoserine intermediate is Ser-109. Ser-109, Asp-251, Asp-253, and Asp-255 together coordinate Mg(2+). Phosphoserine is present on Ser-109.

The protein belongs to the phosphohexose mutase family. The cofactor is Mg(2+). Activated by phosphorylation.

It carries out the reaction alpha-D-glucosamine 1-phosphate = D-glucosamine 6-phosphate. Functionally, catalyzes the conversion of glucosamine-6-phosphate to glucosamine-1-phosphate. The polypeptide is Phosphoglucosamine mutase (Myxococcus xanthus (strain DK1622)).